The chain runs to 350 residues: MFGLKRNAVIRTQLYCGGAGLGAGSGGASSSGGRLLASGREATTRREGGGGEAGAVIGGSAGASPPTTLAPDARRVARPSPIGAEGPNVSATPPRLLLLAPPCRASPPEEMEGPAADAIMSPEEELDGYEPEPLGKRPAVLPLLELVGEASSGPGMDGSLPSTPPPAEEEEDELYRQSLEIISRYLREQATGAKDAKPLGGSRAASRKALETLQRVGDGVQRNHETAFQGMLRKLDIKNEDDVKSLSRVIVHVFSDGVTNWGRIVTLISFGAFVAKHLKSINQESCIEPLAESITDVLVRTKRDWLVKQRGWDGFVEFFHVEDLEGGIRNVLLAFAGVAGVGAGLAYLIR.

Residue lysine 5 forms a Glycyl lysine isopeptide (Lys-Gly) (interchain with G-Cter in ubiquitin) linkage. The tract at residues 23–95 (AGSGGASSSG…GPNVSATPPR (73 aa)) is disordered. Residues 31–41 (SGGRLLASGRE) show a composition bias toward low complexity. Over residues 50–61 (GGEAGAVIGGSA) the composition is skewed to gly residues. Residues 104 to 175 (RASPPEEMEG…PAEEEEDELY (72 aa)) form a PEST-like region. The residue at position 121 (serine 121) is a Phosphoserine. A Glycyl lysine isopeptide (Lys-Gly) (interchain with G-Cter in ubiquitin) cross-link involves residue lysine 136. The interval 150–169 (ASSGPGMDGSLPSTPPPAEE) is disordered. At serine 159 the chain carries Phosphoserine; by GSK3-alpha and GSK3-beta. Position 162 is a phosphoserine (serine 162). Threonine 163 bears the Phosphothreonine mark. Glycyl lysine isopeptide (Lys-Gly) (interchain with G-Cter in ubiquitin) cross-links involve residues lysine 194 and lysine 197. The BH3 motif lies at 209–223 (ALETLQRVGDGVQRN). Residues 252–272 (HVFSDGVTNWGRIVTLISFGA) carry the BH1 motif. Positions 304–319 (DWLVKQRGWDGFVEFF) match the BH2 motif. The chain crosses the membrane as a helical span at residues 327 to 349 (GIRNVLLAFAGVAGVGAGLAYLI).

The protein belongs to the Bcl-2 family. In terms of assembly, interacts with HIF3A (via C-terminus domain). Interacts with BOK, BIK, BAX, BAK1, and TPT1. Interacts with unphosphorylated BAD. Interacts with BMF, BBC3 and PMAIP1. Interacts with BOP. Interacts with BCL2L11; may sequester BCL2L11 to prevent its pro-apoptotic activity. Interacts with GIMAP5 and HSPA8/HSC70; the interaction between HSPA8 and MCL1 is impaired in the absence of GIMAP5. Post-translationally, cleaved by CASP3 during apoptosis, yielding a pro-apoptotic C-terminal fragment. Rapidly degraded in the absence of phosphorylation in the PEST region. In terms of processing, phosphorylated on Ser-159, by GSK3, in response to IL3/interleukin-3 withdrawal. Phosphorylation at Ser-159 induces ubiquitination and proteasomal degradation, abrogating the anti-apoptotic activity. Treatment with taxol or okadaic acid induces phosphorylation on additional sites. Post-translationally, ubiquitinated. Ubiquitination is induced by phosphorylation at Ser-159. Deubiquitinated by USP20; leading to increased stability. As to expression, detected in peripheral blood mononuclear cells and bone marrow.

The protein resides in the membrane. It is found in the cytoplasm. It localises to the mitochondrion. The protein localises to the nucleus. Its subcellular location is the nucleoplasm. Involved in the regulation of apoptosis versus cell survival, and in the maintenance of viability but not of proliferation. Mediates its effects by interactions with a number of other regulators of apoptosis. The sequence is that of Induced myeloid leukemia cell differentiation protein Mcl-1 homolog (MCL1) from Canis lupus familiaris (Dog).